The primary structure comprises 116 residues: POU domain, class 4, transcription factor 1 (116 aa).

The region spanning 1–54 (VTQADVGSALANLKIPGVGSLSQSTICRFESLTLSHNNMIALKPILQAWLEEAE) is the POU-specific domain. Positions 56–79 (AQREKMNKPELFNGGEKKRKRTSI) are disordered. The segment at residues 72-116 (KKRKRTSIAAPEKRSLEAYFAVQPRPSSEKIAAIAEKLDLKKNVV) is a DNA-binding region (homeobox).

The protein belongs to the POU transcription factor family. Class-4 subfamily.

It is found in the nucleus. The protein localises to the cytoplasm. Its function is as follows. Multifunctional transcription factor with different regions mediating its different effects. Acts by binding (via its C-terminal domain) to sequences related to the consensus octamer motif 5'-ATGCAAAT-3' in the regulatory regions of its target genes. Regulates the expression of specific genes involved in differentiation and survival within a subset of neuronal lineages. It has been shown that activation of some of these genes requires its N-terminal domain, maybe through a neuronal-specific cofactor. The chain is POU domain, class 4, transcription factor 1 (POU4F1) from Gallus gallus (Chicken).